We begin with the raw amino-acid sequence, 1436 residues long: Non-structural polyprotein 1AB (1436 aa).

Residues 104 to 142 (KLIHKANALQERLRLSQEEKATLALDVQFLQHENVRLKE) are a coiled coil. 5 consecutive transmembrane segments (helical) span residues 156–176 (WIIM…YAHS), 239–259 (VFYY…LAIG), 286–306 (VLPT…TLMV), 313–333 (LLAI…LCFM), and 344–364 (GLIA…LTGT). Catalysis depends on charge relay system; for serine protease activity residues histidine 461, aspartate 489, and serine 551. Positions 587–620 (VKAPSQVELLKEEIERLKAQLNSATENATTVVTQ) form a coiled coil. Tyrosine 693 is subject to O-(5'-phospho-RNA)-tyrosine. Disordered regions lie at residues 756–828 (AKPI…YSQT) and 913–934 (SKNK…EDQG). In terms of domain architecture, RdRp catalytic spans 1181–1307 (KHFIEFDWTR…TTPSVPDDYE (127 aa)).

This sequence belongs to the astroviridae polyprotein 1AB family. Monomer. Post-translationally, cleaved by the viral and host proteases. The protease is probably autocatalytically cleaved.

It is found in the host membrane. It carries out the reaction RNA(n) + a ribonucleoside 5'-triphosphate = RNA(n+1) + diphosphate. Functionally, responsible for the cleavage of the polyprotein into functional products. In terms of biological role, protein covalently attached to the 5' extremity of the genomic and subgenomic RNAs. It may serve as a primer for the replicase. The protein is Non-structural polyprotein 1AB (ORF1) of Homo sapiens (Human).